Consider the following 122-residue polypeptide: Putative MOB kinase activator-like 2B (122 aa).

Residues His-69 and His-74 each coordinate Zn(2+).

Belongs to the MOB1/phocein family.

It is found in the nucleus. The protein localises to the cytoplasm. It localises to the cytoskeleton. The protein resides in the phragmoplast. This is Putative MOB kinase activator-like 2B from Arabidopsis thaliana (Mouse-ear cress).